The primary structure comprises 175 residues: Pancreatic beta cell growth factor (175 aa).

A signal peptide spans 1-26; that stretch reads MMLPMTLCRMSWMLLSCLMFLSWVEG. The C-type lectin domain maps to 38-175; sequence ITCPQGSVAY…ELPYICKFKV (138 aa). Cystine bridges form between Cys-40-Cys-51, Cys-68-Cys-171, and Cys-146-Cys-163.

In terms of tissue distribution, expressed only in CW animals pancreas and to a lesser extent in duodenum. In pancreas it is found in acinar cells, but not in islets.

It localises to the secreted. Constituent of ilotropin, which is a partially purified preparation of cellophane wrapping (CW) pancreata. Capable of initiating duct cell proliferation, a prerequisite for islet neogenesis. In Mesocricetus auratus (Golden hamster), this protein is Pancreatic beta cell growth factor (INGAP).